The primary structure comprises 922 residues: Probable dipeptidyl-aminopeptidase B (922 aa).

Residues 1-16 (MATEKGHSRDDEERVP) show a composition bias toward basic and acidic residues. The disordered stretch occupies residues 1–21 (MATEKGHSRDDEERVPLTRGS). The Cytoplasmic portion of the chain corresponds to 1–99 (MATEKGHSRD…KPMHKSVKIA (99 aa)). A helical; Signal-anchor for type II membrane protein transmembrane segment spans residues 100–120 (LWSLLFLSLGGWSLAFVLFIF). Over 121-922 (RSHDTYQTPI…AGLYKFKHLC (802 aa)) the chain is Vacuolar. Asparagine 135, asparagine 200, asparagine 351, and asparagine 574 each carry an N-linked (GlcNAc...) asparagine glycan. The active-site Charge relay system is the serine 756. N-linked (GlcNAc...) asparagine glycosylation is present at asparagine 815. Active-site charge relay system residues include aspartate 833 and histidine 866. Asparagine 902 carries an N-linked (GlcNAc...) asparagine glycan.

Belongs to the peptidase S9B family.

Its subcellular location is the vacuole membrane. The enzyme catalyses Release of an N-terminal dipeptide, Xaa-Yaa-|-Zaa-, from a polypeptide, preferentially when Yaa is Pro, provided Zaa is neither Pro nor hydroxyproline.. Type IV dipeptidyl-peptidase which removes N-terminal dipeptides sequentially from polypeptides having unsubstituted N-termini provided that the penultimate residue is proline. In Ajellomyces capsulatus (strain NAm1 / WU24) (Darling's disease fungus), this protein is Probable dipeptidyl-aminopeptidase B (DAPB).